Reading from the N-terminus, the 185-residue chain is Ribosome-recycling factor (185 aa).

This sequence belongs to the RRF family.

It is found in the cytoplasm. In terms of biological role, responsible for the release of ribosomes from messenger RNA at the termination of protein biosynthesis. May increase the efficiency of translation by recycling ribosomes from one round of translation to another. In Campylobacter jejuni subsp. jejuni serotype O:23/36 (strain 81-176), this protein is Ribosome-recycling factor.